The following is a 263-amino-acid chain: Proteasome subunit beta type-5 (263 aa).

A propeptide spans 1–59 (removed in mature form); it reads MALASVLERPLSVNRRGFFGLGGRADLLDLGPGSPSDGLSLAAPSWGVPEEPRIEILHG. Threonine 60 functions as the Nucleophile in the catalytic mechanism. Alanine 108 lines the bortezomib pocket.

The protein belongs to the peptidase T1B family. The 26S proteasome consists of a 20S proteasome core and two 19S regulatory subunits. The 20S proteasome core is a barrel-shaped complex made of 28 subunits that are arranged in four stacked rings. The two outer rings are each formed by seven alpha subunits, and the two inner rings are formed by seven beta subunits. The proteolytic activity is exerted by three beta-subunits PSMB5, PSMB6 and PSMB7. Directly interacts with POMP. Interacts with ABCB1 and TAP1.

The protein localises to the cytoplasm. The protein resides in the nucleus. The enzyme catalyses Cleavage of peptide bonds with very broad specificity.. In terms of biological role, component of the 20S core proteasome complex involved in the proteolytic degradation of most intracellular proteins. This complex plays numerous essential roles within the cell by associating with different regulatory particles. Associated with two 19S regulatory particles, forms the 26S proteasome and thus participates in the ATP-dependent degradation of ubiquitinated proteins. The 26S proteasome plays a key role in the maintenance of protein homeostasis by removing misfolded or damaged proteins that could impair cellular functions, and by removing proteins whose functions are no longer required. Associated with the PA200 or PA28, the 20S proteasome mediates ubiquitin-independent protein degradation. This type of proteolysis is required in several pathways including spermatogenesis (20S-PA200 complex) or generation of a subset of MHC class I-presented antigenic peptides (20S-PA28 complex). Within the 20S core complex, PSMB5 displays a chymotrypsin-like activity. The chain is Proteasome subunit beta type-5 from Bos taurus (Bovine).